We begin with the raw amino-acid sequence, 101 residues long: Replication restart protein PriB (101 aa).

Residues 1–101 (MTTNNLVLAG…LHAENVELKT (101 aa)) form the SSB domain.

It belongs to the PriB family. As to quaternary structure, homodimer. Interacts with PriA and DnaT. Component of the replication restart primosome. Primosome assembly occurs via a 'hand-off' mechanism. PriA binds to replication forks, subsequently PriB then DnaT bind; DnaT then displaces ssDNA to generate the helicase loading substrate.

Functionally, involved in the restart of stalled replication forks, which reloads the replicative helicase on sites other than the origin of replication; the PriA-PriB pathway is the major replication restart pathway. During primosome assembly it facilitates complex formation between PriA and DnaT on DNA; stabilizes PriA on DNA. Stimulates the DNA unwinding activity of PriA helicase. The sequence is that of Replication restart protein PriB from Shewanella piezotolerans (strain WP3 / JCM 13877).